The following is a 327-amino-acid chain: tRNA N6-adenosine threonylcarbamoyltransferase (327 aa).

His107 and His111 together coordinate Fe cation. Substrate contacts are provided by residues 129 to 133 (LVSGG), Asp162, Gly175, and Asn263. Asp291 contacts Fe cation.

The protein belongs to the KAE1 / TsaD family. It depends on Fe(2+) as a cofactor.

Its subcellular location is the cytoplasm. It carries out the reaction L-threonylcarbamoyladenylate + adenosine(37) in tRNA = N(6)-L-threonylcarbamoyladenosine(37) in tRNA + AMP + H(+). In terms of biological role, required for the formation of a threonylcarbamoyl group on adenosine at position 37 (t(6)A37) in tRNAs that read codons beginning with adenine. Is involved in the transfer of the threonylcarbamoyl moiety of threonylcarbamoyl-AMP (TC-AMP) to the N6 group of A37, together with TsaE and TsaB. TsaD likely plays a direct catalytic role in this reaction. This is tRNA N6-adenosine threonylcarbamoyltransferase from Nautilia profundicola (strain ATCC BAA-1463 / DSM 18972 / AmH).